Here is a 263-residue protein sequence, read N- to C-terminus: MPEGPEIRRAADKLEAAIKGEPLTNVWFAFPQLQPYQTQLTGQRVTHIATRGKALLTHFSGGLTLYSHNQLYGVWRVVDAGVEPQSNRVLRVRLQTASKAILLYSASDIDILTAEQVANHPFLLRVGPDVLDMTLTAEQVKARLLSAKFRNRQFSGLLLDQAFLAGLGNYLRVEILWQVGLSGKRKAAELSDSQLDALAHALLDIPRLSYRTRGLVDDNKHHGALFRFKVFHRDGERCERCGGIIEKTTLSSRPFYWCPGCQH.

Proline 2 serves as the catalytic Schiff-base intermediate with DNA. Glutamate 3 acts as the Proton donor in catalysis. Catalysis depends on lysine 53, which acts as the Proton donor; for beta-elimination activity. DNA-binding residues include glutamine 70, arginine 125, and asparagine 169. The FPG-type zinc finger occupies 229–263; the sequence is KVFHRDGERCERCGGIIEKTTLSSRPFYWCPGCQH. Arginine 253 acts as the Proton donor; for delta-elimination activity in catalysis.

The protein belongs to the FPG family. Zn(2+) is required as a cofactor.

The enzyme catalyses 2'-deoxyribonucleotide-(2'-deoxyribose 5'-phosphate)-2'-deoxyribonucleotide-DNA = a 3'-end 2'-deoxyribonucleotide-(2,3-dehydro-2,3-deoxyribose 5'-phosphate)-DNA + a 5'-end 5'-phospho-2'-deoxyribonucleoside-DNA + H(+). Its function is as follows. Involved in base excision repair of DNA damaged by oxidation or by mutagenic agents. Acts as a DNA glycosylase that recognizes and removes damaged bases. Has a preference for oxidized pyrimidines, such as thymine glycol, 5,6-dihydrouracil and 5,6-dihydrothymine. Has AP (apurinic/apyrimidinic) lyase activity and introduces nicks in the DNA strand. Cleaves the DNA backbone by beta-delta elimination to generate a single-strand break at the site of the removed base with both 3'- and 5'-phosphates. This is Endonuclease 8 from Klebsiella pneumoniae subsp. pneumoniae (strain ATCC 700721 / MGH 78578).